The chain runs to 308 residues: Glutaminase (308 aa).

Substrate is bound by residues S68, N118, E162, N169, Y193, Y244, and V262.

This sequence belongs to the glutaminase family. In terms of assembly, homotetramer.

It carries out the reaction L-glutamine + H2O = L-glutamate + NH4(+). This Hahella chejuensis (strain KCTC 2396) protein is Glutaminase.